The primary structure comprises 52 residues: Ribosome modulation factor (52 aa).

It belongs to the ribosome modulation factor family.

It localises to the cytoplasm. Its function is as follows. During stationary phase, converts 70S ribosomes to an inactive dimeric form (100S ribosomes). The chain is Ribosome modulation factor from Xenorhabdus nematophila (strain ATCC 19061 / DSM 3370 / CCUG 14189 / LMG 1036 / NCIMB 9965 / AN6).